Consider the following 451-residue polypeptide: Tubulin alpha-1A chain (451 aa).

Positions 1–4 (MREC) match the MREC motif motif. GTP is bound by residues Q11, E71, S140, G144, T145, T179, N206, and N228. E71 provides a ligand contact to Mg(2+). Residue E254 is part of the active site. The segment at 432–451 (YEEVGVDSVEGEGEEEGEEY) is disordered. 5-glutamyl polyglutamate is present on E445.

This sequence belongs to the tubulin family. As to quaternary structure, dimer of alpha and beta chains. A typical microtubule is a hollow water-filled tube with an outer diameter of 25 nm and an inner diameter of 15 nM. Alpha-beta heterodimers associate head-to-tail to form protofilaments running lengthwise along the microtubule wall with the beta-tubulin subunit facing the microtubule plus end conferring a structural polarity. Microtubules usually have 13 protofilaments but different protofilament numbers can be found in some organisms and specialized cells. Requires Mg(2+) as cofactor. Some glutamate residues at the C-terminus are polyglycylated, resulting in polyglycine chains on the gamma-carboxyl group. Glycylation is mainly limited to tubulin incorporated into axonemes (cilia and flagella) whereas glutamylation is prevalent in neuronal cells, centrioles, axonemes, and the mitotic spindle. Both modifications can coexist on the same protein on adjacent residues, and lowering polyglycylation levels increases polyglutamylation, and reciprocally. The precise function of polyglycylation is still unclear. Post-translationally, some glutamate residues at the C-terminus are polyglutamylated, resulting in polyglutamate chains on the gamma-carboxyl group. Polyglutamylation plays a key role in microtubule severing by spastin (SPAST). SPAST preferentially recognizes and acts on microtubules decorated with short polyglutamate tails: severing activity by SPAST increases as the number of glutamates per tubulin rises from one to eight, but decreases beyond this glutamylation threshold. In terms of processing, undergoes a tyrosination/detyrosination cycle, the cyclic removal and re-addition of a C-terminal tyrosine residue by the enzymes tubulin tyrosine carboxypeptidase (MATCAP1, VASH1 or VASH2) and tubulin tyrosine ligase (TTL), respectively. Tyrosination promotes microtubule interaction with CAP-Gly microtubule plus-end tracking proteins. Tyrosinated tubulins regulate the initiation of dynein-driven motility. Post-translationally, detyrosination is involved in metaphase plate congression by guiding chromosomes during mitosis. Detyrosination increases microtubules-dependent mechanotransduction in dystrophic cardiac and skeletal muscle. In cardiomyocytes, detyrosinated microtubules are required to resist to contractile compression during contraction.

The protein localises to the cytoplasm. Its subcellular location is the cytoskeleton. The enzyme catalyses GTP + H2O = GDP + phosphate + H(+). Functionally, tubulin is the major constituent of microtubules, a cylinder consisting of laterally associated linear protofilaments composed of alpha- and beta-tubulin heterodimers. Microtubules grow by the addition of GTP-tubulin dimers to the microtubule end, where a stabilizing cap forms. Below the cap, tubulin dimers are in GDP-bound state, owing to GTPase activity of alpha-tubulin. This is Tubulin alpha-1A chain (TUBA1A) from Gallus gallus (Chicken).